The chain runs to 715 residues: Autophagy-related protein 13 (715 aa).

The disordered stretch occupies residues 329-510 (DYMERRRSSG…PGSGFIDIED (182 aa)). Residues 340–381 (SGVGATGGGLAGTSGGSGGVSGGVSGGSGGSGGSGGWGGEEG) are compositionally biased toward gly residues. Low complexity-rich tracts occupy residues 382–392 (SPGPAATSASP), 414–432 (RTIS…VVTT), and 445–455 (SSSGGSSRSGS). Positions 458–476 (KYSSSFGTRQWNRSGSISS) are enriched in polar residues. A compositionally biased stretch (low complexity) spans 486–500 (GSAESAMSSGSSLME).

Belongs to the ATG13 family. Fungi subfamily. Interacts with ATG1 to form the ATG1-ATG13 kinase complex.

Its subcellular location is the cytoplasm. The protein resides in the preautophagosomal structure. Its function is as follows. Activates the ATG1 kinase in a nutritional condition dependent manner through the TOR pathway, leading to autophagy. Also involved in cytoplasm to vacuole transport (Cvt) and more specifically in Cvt vesicle formation. Seems to play a role in the switching machinery regulating the conversion between the Cvt pathway and autophagy. Finally, ATG13 is also required for glycogen storage during stationary phase. This Yarrowia lipolytica (strain CLIB 122 / E 150) (Yeast) protein is Autophagy-related protein 13 (ATG13).